Reading from the N-terminus, the 264-residue chain is Apolipoprotein A-I (264 aa).

A signal peptide spans 1–18 (MKAVVLAVAVLFLTGSQA). Tandem repeats lie at residues 67-88 (LKLL…ADLG) and 89-110 (PVTQ…QEMN). Residues 67-264 (LKLLDNWDTL…DQATKQLTAQ (198 aa)) are 10 X approximate tandem repeats. Met-109 bears the Methionine sulfoxide mark. The 3; half-length repeat unit spans residues 111-121 (KDLQEVKQKVQ). Repeat copies occupy residues 122-143 (PYLD…EKVG), 144-165 (PLGT…EKLT), 166-187 (PLGE…TQLA), 188-207 (PYSD…LRDS), and 208-229 (TTFA…EKAK). Residues 230 to 240 (PALEDLRQGLL) form a 9; half-length repeat. Copy 10 of the repeat occupies 241 to 264 (PVLESLKASILSSIDQATKQLTAQ).

It belongs to the apolipoprotein A1/A4/E family. As to quaternary structure, homodimer. Interacts with APOA1BP and CLU. Component of a sperm activating protein complex (SPAP), consisting of APOA1, an immunoglobulin heavy chain, an immunoglobulin light chain and albumin. Interacts with NDRG1. Interacts with SCGB3A2. Interacts with NAXE and YJEFN3. In terms of processing, glycosylated. Palmitoylated. Post-translationally, phosphorylation sites are present in the extracellular medium.

Its subcellular location is the secreted. In terms of biological role, participates in the reverse transport of cholesterol from tissues to the liver for excretion by promoting cholesterol efflux from tissues and by acting as a cofactor for the lecithin cholesterol acyltransferase (LCAT). As part of the SPAP complex, activates spermatozoa motility. In Chinchilla lanigera (Long-tailed chinchilla), this protein is Apolipoprotein A-I (APOA1).